The primary structure comprises 86 residues: Small ribosomal subunit protein uS17 (86 aa).

This sequence belongs to the universal ribosomal protein uS17 family. As to quaternary structure, part of the 30S ribosomal subunit.

One of the primary rRNA binding proteins, it binds specifically to the 5'-end of 16S ribosomal RNA. The chain is Small ribosomal subunit protein uS17 from Helicobacter pylori (strain P12).